The chain runs to 799 residues: Pentatricopeptide repeat-containing protein At2g26790, mitochondrial (799 aa).

A mitochondrion-targeting transit peptide spans 1–27; the sequence is MRFSPTFFLLSQLRLTRRRAATSSRFY. PPR repeat units lie at residues 145 to 179, 180 to 214, 215 to 250, 251 to 278, 282 to 316, 317 to 351, 352 to 386, 387 to 421, 422 to 456, 457 to 491, 492 to 522, 523 to 553, 555 to 589, 590 to 624, 625 to 659, 660 to 695, 708 to 742, and 743 to 777; these read LIRVSGALVKAYVSLGMFDEATDVLFQSKRLDCVV, DIKACNFLMNRMTEFGKIGMLMTLFKQLKQLGLCA, NEYTYAIVVKALCRKGNLEEAAMLLIENESVFGYKT, FINGLCVTGETEKAVALILELIDRKYLA, LRAVLGMVVRGFCNEMKMKAAESVIIEMEEIGFGL, DVYACLAVIDRYCKNMNLPEALGFLDKMLGKGLKV, NCVIVSLILQCYCKMDMCLEALEKFKEFRDMNIFL, DRVCYNVAFDALSKLGRVEEAFELLQEMKDRGIVP, DVINYTTLIDGYCLQGKVVDALDLIDEMIGNGMSP, DLITYNVLVSGLARNGHEEEVLEIYERMKAEGPKP, NAVTNSVIIEGLCFARKVKEAEDFFSSLEQK, CPENKASFVKGYCEAGLSKKAYKAFVRLEYP, RKSVYIKLFFSLCIEGYLEKAHDVLKKMSAYRVEP, GRSMCGKMIGAFCKLNNVREAQVLFDTMVERGLIP, DLFTYTIMIHTYCRLNELQKAESLFEDMKQRGIKP, DVVTYTVLLDRYLKLDPEHHETCSVQGEVGKRKASE, DVVCYTVLIDRQCKMNNLEQAAELFDRMIDSGLEP, and DMVAYTTLISSYFRKGYIDMAVTLVTELSKKYNIP.

Belongs to the PPR family. P subfamily.

The protein localises to the mitochondrion. The protein is Pentatricopeptide repeat-containing protein At2g26790, mitochondrial of Arabidopsis thaliana (Mouse-ear cress).